Consider the following 635-residue polypeptide: Putative adagio-like protein 2 (635 aa).

Over residues 1–25 (MEWDSDSEGSGDEEEEEEEEEEEGV) the composition is skewed to acidic residues. The tract at residues 1–32 (MEWDSDSEGSGDEEEEEEEEEEEGVEVGGGGD) is disordered. The 80-residue stretch at 44 to 123 (ALAIEGVLGA…TDIRRCLEEG (80 aa)) folds into the PAS domain. The residue at position 91 (cysteine 91) is an S-4a-FMN cysteine. An F-box domain is found at 209–255 (SDLFLLSDEVLCQKILSRLSPRDIASVNSVCKRLYHLTRNDDLWRMV). Kelch repeat units lie at residues 371-421 (RLVL…TLDG), 423-474 (KLVV…VYDG), 476-530 (KILM…PPPR), and 542-594 (RILI…VVGG).

Belongs to the ADAGIO family. Post-translationally, FMN binds covalently to cysteine after exposure to blue light and is reversed in the dark.

Its subcellular location is the nucleus. It participates in protein modification; protein ubiquitination. In terms of biological role, component of an E3 ubiquitin ligase complex that plays a central role in blue light-dependent circadian cycles. Acts as a blue light photoreceptor, due to the presence of FMN, that mediates light-regulated protein degradation of critical clock components by targeting them to the proteasome complex. The protein is Putative adagio-like protein 2 of Oryza sativa subsp. japonica (Rice).